The following is a 549-amino-acid chain: Sorting nexin-33 (549 aa).

The SH3 domain occupies 1–61; sequence MALKARALYS…PASYVEILRP (61 aa). Polar residues predominate over residues 66-83; that stretch reads VQVDYSGHTQGYTDSPHQ. The segment at 66–137 is disordered; it reads VQVDYSGHTQ…RPEYTHRPRP (72 aa). The segment covering 86 to 101 has biased composition (acidic residues); the sequence is YDDDEEDDDDWDDWDD. Positions 110–119 are enriched in polar residues; that stretch reads SGSNGVSRSQ. The span at 127–137 shows a compositional bias: basic and acidic residues; it reads PRPEYTHRPRP. The region spanning 205-315 is the PX domain; that stretch reads FSCSVEEPTK…HFLSCQDEKQ (111 aa). A BAR domain is found at 346–549; the sequence is LQDVEERVDV…EKTLHMYDDL (204 aa).

The protein belongs to the sorting nexin family.

It is found in the cytoplasm. The protein resides in the cytosol. Its subcellular location is the membrane. The protein localises to the cytoplasmic vesicle membrane. In terms of biological role, plays a role in the reorganization of the cytoskeleton, endocytosis and cellular vesicle trafficking, both during interphase and at the end of mitotic cell divisions. Required for efficient progress through mitosis and cytokinesis. Required for normal formation of the cleavage furrow at the end of mitosis. Modulates endocytosis of cell-surface proteins. Promotes membrane tubulation (in vitro). May promote the formation of macropinosomes. The chain is Sorting nexin-33 (snx33) from Xenopus tropicalis (Western clawed frog).